A 241-amino-acid polypeptide reads, in one-letter code: Centromere protein H (241 aa).

Position 1 is an N-acetylmethionine (M1). Residues 1 to 24 are disordered; it reads MEEQPRERSEAGAEACEEKRGLSQ. Residues 28-186 are a coiled coil; it reads ERIEDRISLL…KEDVDKMENS (159 aa). K61 is covalently cross-linked (Glycyl lysine isopeptide (Lys-Gly) (interchain with G-Cter in SUMO2)). Phosphothreonine is present on T62.

This sequence belongs to the CENP-H/MCM16 family. Self-associates. Component of the CENPA-NAC complex, at least composed of CENPA, CENPC, CENPH, CENPM, CENPN, CENPT and CENPU. The CENPA-NAC complex interacts with the CENPA-CAD complex, composed of CENPI, CENPK, CENPL, CENPO, CENPP, CENPQ, CENPR and CENPS. Interacts directly with CENPK. Interacts with KIF2C and NDC80. Interacts with TRIM36. In terms of tissue distribution, abundantly expressed in thymus, spleen, uterus, ovary, testis and muscle, and weakly expressed in small intestine, lung and stomach. Barely detectable expression in kidney, liver, skin and prostate gland. Not detected in brain, heart or adrenal gland. Also expressed weakly in various hematopoietic cell lines.

It localises to the nucleus. The protein resides in the chromosome. Its subcellular location is the centromere. The protein localises to the kinetochore. In terms of biological role, component of the CENPA-NAC (nucleosome-associated) complex, a complex that plays a central role in assembly of kinetochore proteins, mitotic progression and chromosome segregation. The CENPA-NAC complex recruits the CENPA-CAD (nucleosome distal) complex and may be involved in incorporation of newly synthesized CENPA into centromeres. Required for chromosome congression and efficiently align the chromosomes on a metaphase plate. This is Centromere protein H from Mus musculus (Mouse).